The sequence spans 230 residues: PKHD-type hydroxylase Xfasm12_1709 (230 aa).

Residues Arg-78–Ser-182 enclose the Fe2OG dioxygenase domain. Residues His-96, Asp-98, and His-163 each contribute to the Fe cation site. Arg-173 contacts 2-oxoglutarate.

The cofactor is Fe(2+). L-ascorbate is required as a cofactor.

The polypeptide is PKHD-type hydroxylase Xfasm12_1709 (Xylella fastidiosa (strain M12)).